Consider the following 438-residue polypeptide: Cyclic 2,3-diphosphoglycerate synthetase (438 aa).

The protein belongs to the cyclic 2,3-diphosphoglycerate synthetase family.

Its subcellular location is the cytoplasm. The enzyme catalyses (2R)-2,3-bisphosphoglycerate + ATP + H(+) = cyclic (2R)-2,3-bisphosphoglycerate + ADP + phosphate. Its function is as follows. Catalyzes the formation of cyclic 2,3-diphosphoglycerate (cDPG) by formation of an intramolecular phosphoanhydride bond at the expense of ATP. This Thermococcus gammatolerans (strain DSM 15229 / JCM 11827 / EJ3) protein is Cyclic 2,3-diphosphoglycerate synthetase.